The primary structure comprises 735 residues: Photosystem I P700 chlorophyll a apoprotein A2 (735 aa).

8 helical membrane passes run 47–70 (IFAS…FHVA), 136–159 (LFTG…LHLQ), 176–200 (LNHH…HVAI), 274–292 (MAHH…GHMY), 331–354 (LHFQ…QHIY), 370–396 (AALY…IFFI), 418–440 (AIIS…LYVH), and 518–536 (FLVH…LILV). The [4Fe-4S] cluster site is built by Cys-560 and Cys-569. 2 helical membrane-spanning segments follow: residues 576–597 (AFYL…YFHW) and 644–666 (LSVW…MFLI). Chlorophyll a contacts are provided by His-655, Met-663, and Tyr-671. Trp-672 serves as a coordination point for phylloquinone. Residues 708–728 (LVGLVHFSVGYIFTYAAFLIA) traverse the membrane as a helical segment.

It belongs to the PsaA/PsaB family. In terms of assembly, the PsaA/B heterodimer binds the P700 chlorophyll special pair and subsequent electron acceptors. PSI consists of a core antenna complex that captures photons, and an electron transfer chain that converts photonic excitation into a charge separation. The eukaryotic PSI reaction center is composed of at least 11 subunits. The cofactor is P700 is a chlorophyll a/chlorophyll a' dimer, A0 is one or more chlorophyll a, A1 is one or both phylloquinones and FX is a shared 4Fe-4S iron-sulfur center..

It is found in the plastid. The protein resides in the chloroplast thylakoid membrane. It carries out the reaction reduced [plastocyanin] + hnu + oxidized [2Fe-2S]-[ferredoxin] = oxidized [plastocyanin] + reduced [2Fe-2S]-[ferredoxin]. PsaA and PsaB bind P700, the primary electron donor of photosystem I (PSI), as well as the electron acceptors A0, A1 and FX. PSI is a plastocyanin/cytochrome c6-ferredoxin oxidoreductase, converting photonic excitation into a charge separation, which transfers an electron from the donor P700 chlorophyll pair to the spectroscopically characterized acceptors A0, A1, FX, FA and FB in turn. Oxidized P700 is reduced on the lumenal side of the thylakoid membrane by plastocyanin or cytochrome c6. The chain is Photosystem I P700 chlorophyll a apoprotein A2 from Chlamydomonas moewusii (Chlamydomonas eugametos).